Here is a 293-residue protein sequence, read N- to C-terminus: MRDLIGFKAVAVHAHPDDEAIWTGGLLANLAARGADVTVVTCTLGEEGEVIGEPYQGLTNKNADQLGGFRIHELHKSLSLLGVRGEFLGGAGCWRDSGMIGDPANEHPRAFISSGDKSIEQLTEIFERLQPDLVITYGPDGGYGHPDHIRAHNITHTVAENMDIPRILWAVTPRTELEQGMAAITTLPSGWRRALPGEVACVDHVDLTIALDDHAFAAKAAAMRAHATQLWLADATISDVNPHAAIAGVADPKAAPLVFALSNLIAQPLLDIECYQLGGGTPLTSNDPTEGIR.

Zn(2+) is bound by residues histidine 15, aspartate 18, and histidine 148.

This sequence belongs to the MshB deacetylase family. It depends on Zn(2+) as a cofactor.

It carries out the reaction 1D-myo-inositol 2-acetamido-2-deoxy-alpha-D-glucopyranoside + H2O = 1D-myo-inositol 2-amino-2-deoxy-alpha-D-glucopyranoside + acetate. Its function is as follows. Catalyzes the deacetylation of 1D-myo-inositol 2-acetamido-2-deoxy-alpha-D-glucopyranoside (GlcNAc-Ins) in the mycothiol biosynthesis pathway. The sequence is that of 1D-myo-inositol 2-acetamido-2-deoxy-alpha-D-glucopyranoside deacetylase from Corynebacterium diphtheriae (strain ATCC 700971 / NCTC 13129 / Biotype gravis).